Here is a 95-residue protein sequence, read N- to C-terminus: Large ribosomal subunit protein eL37x (95 aa).

Cys19, Cys22, Cys34, and Cys37 together coordinate Zn(2+). Residues 19–37 form a C4-type zinc finger; that stretch reads CVRCGRRSFHIQKSRCSAC. The interval 73-95 is disordered; it reads RFKTGFREGTEAKPRSKASASSA. Residues 77-86 show a composition bias toward basic and acidic residues; the sequence is GFREGTEAKP.

This sequence belongs to the eukaryotic ribosomal protein eL37 family. Zn(2+) serves as cofactor.

Binds to the 23S rRNA. This chain is Large ribosomal subunit protein eL37x (RPL37C), found in Arabidopsis thaliana (Mouse-ear cress).